The chain runs to 325 residues: Gamma-hemolysin component B (325 aa).

An N-terminal signal peptide occupies residues 1 to 26; that stretch reads MKMNKLVKSSVATSMALLLLSGTANA.

Belongs to the aerolysin family. As to quaternary structure, toxicity requires sequential binding and synergistic association of a class S and a class F component which form heterooligomeric complexes. HlgB (class F) associates with either hlgA thus forming an AB toxin or with hlgC thus forming a CB toxin. Interacts with host AMFR.

It localises to the secreted. In terms of biological role, toxin that seems to act by forming pores in the membrane of the cell. Has a hemolytic and a leucotoxic activity. Promotes host AMFR-mediated inflammation by mediating 'Lys-27'-linked ubiquitination of TAB3, TAK1-TAB3 complex formation and phosphorylation of TAK1/MAP3K7. In turn, activates host NF-kappa-B signaling pathway. This is Gamma-hemolysin component B (hlgB) from Staphylococcus aureus (strain NCTC 8325 / PS 47).